Here is a 416-residue protein sequence, read N- to C-terminus: Probable protein phosphatase 2C 49 (416 aa).

The 321-residue stretch at 91–411 folds into the PPM-type phosphatase domain; sequence RYGVTSVFGR…DNVSVVVVDL (321 aa). Mn(2+) contacts are provided by Asp131, Gly132, and Asp319. Residues 343 to 360 are compositionally biased toward pro residues; that stretch reads PPSPPGCSRPKAVLPPPA. The interval 343–368 is disordered; that stretch reads PPSPPGCSRPKAVLPPPAGASGGGGG. Asp402 serves as a coordination point for Mn(2+).

Belongs to the PP2C family. Requires Mg(2+) as cofactor. The cofactor is Mn(2+).

The enzyme catalyses O-phospho-L-seryl-[protein] + H2O = L-seryl-[protein] + phosphate. It catalyses the reaction O-phospho-L-threonyl-[protein] + H2O = L-threonyl-[protein] + phosphate. The polypeptide is Probable protein phosphatase 2C 49 (Oryza sativa subsp. japonica (Rice)).